We begin with the raw amino-acid sequence, 325 residues long: ATP synthase gamma chain (325 aa).

It belongs to the ATPase gamma chain family. F-type ATPases have 2 components, CF(1) - the catalytic core - and CF(0) - the membrane proton channel. CF(1) has five subunits: alpha(3), beta(3), gamma(1), delta(1), epsilon(1). CF(0) has three main subunits: a, b and c.

The protein localises to the cell membrane. Its function is as follows. Produces ATP from ADP in the presence of a proton gradient across the membrane. The gamma chain is believed to be important in regulating ATPase activity and the flow of protons through the CF(0) complex. This is ATP synthase gamma chain from Corynebacterium glutamicum (strain ATCC 13032 / DSM 20300 / JCM 1318 / BCRC 11384 / CCUG 27702 / LMG 3730 / NBRC 12168 / NCIMB 10025 / NRRL B-2784 / 534).